A 273-amino-acid chain; its full sequence is Large ribosomal subunit protein uL2 (273 aa).

2 disordered regions span residues 34 to 54 (LEKK…TRHI) and 223 to 273 (VAMN…RRRK).

The protein belongs to the universal ribosomal protein uL2 family. As to quaternary structure, part of the 50S ribosomal subunit. Forms a bridge to the 30S subunit in the 70S ribosome.

One of the primary rRNA binding proteins. Required for association of the 30S and 50S subunits to form the 70S ribosome, for tRNA binding and peptide bond formation. It has been suggested to have peptidyltransferase activity; this is somewhat controversial. Makes several contacts with the 16S rRNA in the 70S ribosome. This Azotobacter vinelandii (strain DJ / ATCC BAA-1303) protein is Large ribosomal subunit protein uL2.